A 225-amino-acid polypeptide reads, in one-letter code: Ribonuclease 3 (225 aa).

The region spanning 5–127 (IDKLERKIGY…IIGAVYLDSD (123 aa)) is the RNase III domain. Glutamate 40 contacts Mg(2+). Aspartate 44 is a catalytic residue. The Mg(2+) site is built by aspartate 113 and glutamate 116. Glutamate 116 is a catalytic residue. The DRBM domain occupies 154–224 (DPKTRLQEFL…AETALEQLSN (71 aa)).

This sequence belongs to the ribonuclease III family. As to quaternary structure, homodimer. The cofactor is Mg(2+).

The protein resides in the cytoplasm. The catalysed reaction is Endonucleolytic cleavage to 5'-phosphomonoester.. Digests double-stranded RNA. Involved in the processing of primary rRNA transcript to yield the immediate precursors to the large and small rRNAs (23S and 16S). Processes some mRNAs, and tRNAs when they are encoded in the rRNA operon. Processes pre-crRNA and tracrRNA of type II CRISPR loci if present in the organism. The protein is Ribonuclease 3 of Vibrio atlanticus (strain LGP32) (Vibrio splendidus (strain Mel32)).